The sequence spans 141 residues: Hydroperoxide reductase (141 aa).

Belongs to the OsmC/Ohr family. Homodimer.

The protein resides in the cytoplasm. In terms of biological role, reduces organic and inorganic peroxide substrates. Protects the cell against oxidative stress. In Mycoplasma genitalium (strain ATCC 33530 / DSM 19775 / NCTC 10195 / G37) (Mycoplasmoides genitalium), this protein is Hydroperoxide reductase.